The following is a 70-amino-acid chain: MAKDNIHPNWYPEAKVYCDGQLIMTIGSTKPELHVDIWSGNHPFFTGSQRIIDTEGRVERFMRKYKINKN.

It belongs to the bacterial ribosomal protein bL31 family. Type A subfamily. Part of the 50S ribosomal subunit.

It is found in the plastid. The protein resides in the chloroplast. Binds the 23S rRNA. The sequence is that of Large ribosomal subunit protein bL31c from Pyropia yezoensis (Susabi-nori).